Consider the following 837-residue polypeptide: MFSSSSRPSKEPLLFDIRLRNLDNDVLLIKGPPDEASSVLLSGTIVLSITEPIQIKSLALRLFGRLRLNIPTVLQTVHGPHKRYSKFERNIYSHFWDDFNIKSYFQNLYDNHNNGKITISSKSSTNLAALPKRKRALSTASLISSNGQTSASKNYHTLVKGNYEFPFSAIIPGSLVESVEGLPNAAVTYALEATIERPKQPDLICKKHLRVIRTLAIDAVELSETVSVDNSWPEKVDYTISIPTKAIAIGSSTMINILIVPILKGLKLGPVRISLVENSQYCGSYGGVINQERMVAKLKLKDPLKHVAQIKKKRSLNEAADEGVDTDTGEFQDKWEVRALLNIPASLTKCSQDCRILSNIKVRHKIKFTISLLNPDGHISELRAALPVQLFISPFVPVNVKTSDVIERTLKTFGPSYQVTSQHDNSFSSKNFVDDSEEDVIFQRSASALQLSSMPTIVSGSTLNINSTDAEATAVADTTMVTSLMVPPNYGNHVYDRVYGEVTNEDETSASASSSAVESQAIHNIQNLYISDSNNSNNPILAPNPQIKIEDDSLNNCDSRGDSVNNSNLNLVNSNLTISENWNNNSPSANRYNNIINAGLNSPSLTPSFAHLSRRNSYSRQTSSTSLKNDLELTDLSRVPSYDKAMKSDMIGEDLPPAYPEEELGVQENKKIELERPQILHHKSTSSLLPLPGSSKSSNNLKRSSSRTHLSHSPLPRNNSGSSVSLQQLARNNTDSSFNLNLSFTSAKSSTGSRHFPFNMTTSFTSNSSSKNNSHFDKTDSTSDANKPREEENYTSATHNRRSRSSSVRSNNSNSPLRQGTGSFANLMEMFTKRDRS.

Phosphoserine occurs at positions 138 and 141. Lysine 401 is covalently cross-linked (Glycyl lysine isopeptide (Lys-Gly) (interchain with G-Cter in ubiquitin)). Serine 436 is subject to Phosphoserine. Residues 487 to 490 (PPNY) carry the PY-motif motif. Serine 536 is subject to Phosphoserine. The short motif at 656-659 (PPAY) is the PY-motif element. Disordered stretches follow at residues 675–726 (ERPQ…SVSL) and 763–837 (SFTS…RDRS). Low complexity predominate over residues 685–703 (TSSLLPLPGSSKSSNNLKR). Residues 716–726 (PRNNSGSSVSL) are compositionally biased toward polar residues. A phosphoserine mark is found at serine 720 and serine 725. Residues 763-773 (SFTSNSSSKNN) are compositionally biased toward low complexity. Over residues 774–792 (SHFDKTDSTSDANKPREEE) the composition is skewed to basic and acidic residues. The span at 805–815 (SSSVRSNNSNS) shows a compositional bias: low complexity.

It belongs to the arrestin family. As to quaternary structure, interacts with RSP5 via its 2 PY-motifs.

It localises to the membrane. Its function is as follows. Mediates resistance to o-dinitrobenzene, calcium and zinc. This is Protein ROD1 (ROD1) from Saccharomyces cerevisiae (strain ATCC 204508 / S288c) (Baker's yeast).